The chain runs to 145 residues: Large ribosomal subunit protein uL14m (145 aa).

A mitochondrion-targeting transit peptide spans 1–30; it reads MAFSSGLWGPCVHMSRAFSQRCFSTTGSLG.

This sequence belongs to the universal ribosomal protein uL14 family. In terms of assembly, component of the mitochondrial ribosome large subunit (39S) which comprises a 16S rRNA and about 50 distinct proteins. Interacts with MALSU1.

It localises to the mitochondrion. Its function is as follows. May form part of 2 intersubunit bridges in the assembled ribosome. Upon binding to MALSU1, intersubunit bridge formation is blocked, preventing ribosome formation and repressing translation. The chain is Large ribosomal subunit protein uL14m (MRPL14) from Bos taurus (Bovine).